Here is an 839-residue protein sequence, read N- to C-terminus: Probable inorganic carbon transporter subunit DabA (839 aa).

Residues Cys353, Asp355, His537, and Cys552 each contribute to the Zn(2+) site.

Belongs to the inorganic carbon transporter (TC 9.A.2) DabA family. Forms a complex with DabB. It depends on Zn(2+) as a cofactor.

It localises to the cell membrane. Part of an energy-coupled inorganic carbon pump. This chain is Probable inorganic carbon transporter subunit DabA, found in Chloroflexus aggregans (strain MD-66 / DSM 9485).